The following is a 731-amino-acid chain: MLKEWAIKQGILLKVAETIKSWIFFSQCNKKDDLLHKLDIGFRLDSLHTILQQEVLLQEDVELIELLDPSILSAGQSQQQENGHLPTLCSLATPNIWDLSMLFAFISLLVMLPTWWIVSSWLVWGVILFVYLVIRALRLWRTAKLQVTLKKYSVHLEDMATNSRAFTNLVRKALRLIQETEVISRGFTLVSAACPFNKAGQHPSQHLIGLRKAVYRTLRANFQAARLATLYMLKNYPLNSESDNVTNYICVVPFKELGLGLSEEQISEEEAHNFTDGFSLPALKVLFQLWVAQSSEFFRRLALLLSTTNSPPGPLLTPALLPHRILSDVTQGLPHAHSACLEELKRSYEFYRYFETQHQSVPQCLSKTQQKSRELNNVHTAVRSLQLHLKALLNEVIILEDELEKLVCTKETQELVSEAYPILEQKLKLIQPHVQASNNCWEEAISQVDKLLRRNTDKKGKPEIACENPHCTVVPLKQPTLHIADKDPIPEEQELEAYVDDIDIDSDFRKDDFYYLSQEDKERQKLEHEESKRVLQELKSVLGFKASEAERQKWKQLLFSDHAVLKSLSPVDPVEPISNSEPSMNSDMGKVSKNDTEEESSKSTTTDNEISRTEYLCENSLEGKNKDNSSNEVFRQGAEERMCYQCESEDEPQADGSGLTTAPPTPRDSLQPSIKQRLARLQLSPDFTFTAGLAAEVAARSLSFTTMQEQTFGDEEEEQIIEENKNKIEEK.

Transmembrane regions (helical) follow at residues 91–111 (LATPNIWDLSMLFAFISLLVM) and 114–134 (TWWIVSSWLVWGVILFVYLVI). Residues 382–414 (VRSLQLHLKALLNEVIILEDELEKLVCTKETQE) adopt a coiled-coil conformation. Disordered regions lie at residues 570–671 (PVDP…DSLQ) and 710–731 (QTFGDEEEEQIIEENKNKIEEK). The segment covering 577-586 (ISNSEPSMNS) has biased composition (polar residues). Positions 590–601 (KVSKNDTEEESS) are enriched in basic and acidic residues. Positions 658-671 (GLTTAPPTPRDSLQ) are enriched in polar residues. A compositionally biased stretch (acidic residues) spans 712–721 (FGDEEEEQII). Over residues 722–731 (EENKNKIEEK) the composition is skewed to basic and acidic residues.

The protein belongs to the vezatin family. Interacts with USH2A (via the cytoplasmic region); the interaction associates VEZT with the USH2 complex at the stereocilia base. Interacts with myosin MYO7A and the cadherin-catenins complex.

Its subcellular location is the cell membrane. The protein localises to the cell projection. It is found in the stereocilium membrane. It localises to the cell junction. The protein resides in the adherens junction. Its subcellular location is the nucleus. The protein localises to the cytoplasmic vesicle. It is found in the secretory vesicle. It localises to the acrosome. Functionally, plays a pivotal role in the establishment of adherens junctions and their maintenance in adult life. Required for morphogenesis of the preimplantation embryo, and for the implantation process. This is Vezatin (VEZT) from Pongo abelii (Sumatran orangutan).